Here is a 156-residue protein sequence, read N- to C-terminus: UPF0262 protein Jann_2882 (156 aa).

The protein belongs to the UPF0262 family.

In Jannaschia sp. (strain CCS1), this protein is UPF0262 protein Jann_2882.